The chain runs to 460 residues: Mitochondrial distribution and morphology protein 34 (460 aa).

The SMP-LTD domain occupies 1 to 196 (MSFKFDWESL…LPGIIHRLSQ (196 aa)). Positions 304–321 (HNHQAPKRRTIKYKRKSK) are enriched in basic residues. 2 disordered regions span residues 304–356 (HNHQ…PSRE) and 368–460 (EPSS…AYSG). 2 stretches are compositionally biased toward low complexity: residues 330 to 355 (STEV…TPSR) and 393 to 405 (SPPS…DTSL).

It belongs to the MDM34 family. In terms of assembly, component of the ER-mitochondria encounter structure (ERMES) or MDM complex, composed of MMM1, MDM10, MDM12 and MDM34.

Its subcellular location is the mitochondrion outer membrane. Component of the ERMES/MDM complex, which serves as a molecular tether to connect the endoplasmic reticulum (ER) and mitochondria. Components of this complex are involved in the control of mitochondrial shape and protein biogenesis, and function in nonvesicular lipid trafficking between the ER and mitochondria. MDM34 is required for the interaction of the ER-resident membrane protein MMM1 and the outer mitochondrial membrane-resident beta-barrel protein MDM10. In Yarrowia lipolytica (strain CLIB 122 / E 150) (Yeast), this protein is Mitochondrial distribution and morphology protein 34.